The following is a 276-amino-acid chain: Large ribosomal subunit protein uL2 (276 aa).

Residues Thr-219–Arg-276 form a disordered region.

Belongs to the universal ribosomal protein uL2 family. Part of the 50S ribosomal subunit. Forms a bridge to the 30S subunit in the 70S ribosome.

In terms of biological role, one of the primary rRNA binding proteins. Required for association of the 30S and 50S subunits to form the 70S ribosome, for tRNA binding and peptide bond formation. It has been suggested to have peptidyltransferase activity; this is somewhat controversial. Makes several contacts with the 16S rRNA in the 70S ribosome. In Alkaliphilus metalliredigens (strain QYMF), this protein is Large ribosomal subunit protein uL2.